The primary structure comprises 224 residues: Inhibitor of apoptosis protein (224 aa).

Residues 29–92 (VDARNKSFAI…GFWSRNCGFM (64 aa)) form a BIR repeat. Cys-62, Cys-65, His-82, and Cys-89 together coordinate Zn(2+). A C4-type zinc finger spans residues 189–207 (CMTCGIEQINKDENFCSAC).

Belongs to the asfivirus IAP family. As to quaternary structure, interacts with subunit p17 of host CASP3.

The protein resides in the host cytoplasm. It is found in the virion. In terms of biological role, prevents apoptosis of host cell by inhibiting caspase-3/CASP3 activation to promote the viral replication. Also induces the activation of host NF-kappaB. This Ornithodoros (relapsing fever ticks) protein is Inhibitor of apoptosis protein.